A 743-amino-acid polypeptide reads, in one-letter code: Putative pre-mRNA-splicing factor ATP-dependent RNA helicase DHX32 (743 aa).

Residue Met1 is modified to N-acetylmethionine. Residues 1–28 (MEEEGLECPNSSSEKRYFPESLDSSDGD) form a disordered region. Residues 72-238 (MENLLQNQIV…YGNVPVIEVK (167 aa)) enclose the Helicase ATP-binding domain. 85 to 92 (GDAKCGKS) serves as a coordination point for ATP. A DEAH box motif is present at residues 185–188 (DDIH).

This sequence belongs to the DEAD box helicase family. DEAH subfamily. In terms of tissue distribution, expressed in lymphoid tissues (at protein level). Expressed in brain, heart, skeletal muscle, colon, thymus, spleen, kidney, liver, small intestine, placenta, lung, lymphoid tissues and blood leukocytes.

It localises to the nucleus. It is found in the mitochondrion. The enzyme catalyses ATP + H2O = ADP + phosphate + H(+). This chain is Putative pre-mRNA-splicing factor ATP-dependent RNA helicase DHX32 (DHX32), found in Homo sapiens (Human).